A 306-amino-acid chain; its full sequence is Curved DNA-binding protein (306 aa).

The J domain occupies 5-69; it reads DYYAIMGVKP…QRRAEYDQLW (65 aa).

The protein localises to the cytoplasm. The protein resides in the nucleoid. DNA-binding protein that preferentially recognizes a curved DNA sequence. It is probably a functional analog of DnaJ; displays overlapping activities with DnaJ, but functions under different conditions, probably acting as a molecular chaperone in an adaptive response to environmental stresses other than heat shock. Lacks autonomous chaperone activity; binds native substrates and targets them for recognition by DnaK. Its activity is inhibited by the binding of CbpM. The protein is Curved DNA-binding protein of Salmonella arizonae (strain ATCC BAA-731 / CDC346-86 / RSK2980).